Here is a 229-residue protein sequence, read N- to C-terminus: UPF0173 metal-dependent hydrolase SAR1785 (229 aa).

This sequence belongs to the UPF0173 family.

The protein is UPF0173 metal-dependent hydrolase SAR1785 of Staphylococcus aureus (strain MRSA252).